The chain runs to 173 residues: uncharacterized protein (173 aa).

This is an uncharacterized protein from Rhodospirillum rubrum.